Here is a 476-residue protein sequence, read N- to C-terminus: Phosphomethylpyrimidine synthase (476 aa).

A disordered region spans residues 1-27; it reads MSTQLQHARDGTVTDAMRRVADREGRD. Over residues 7-27 the composition is skewed to basic and acidic residues; that stretch reads HARDGTVTDAMRRVADREGRD. Substrate is bound by residues Asn-67, Met-96, Tyr-125, His-160, 180 to 182, 221 to 224, and Glu-260; these read SRG and DGLR. His-264 is a binding site for Zn(2+). Residue Tyr-287 coordinates substrate. His-328 lines the Zn(2+) pocket. [4Fe-4S] cluster contacts are provided by Cys-408, Cys-411, and Cys-416. Positions 425–476 are disordered; the sequence is RDAGDDADDMTELTTETDLSESAAAEVNRPPTGTHDAPAAEQAPSPGDDDDD. The segment covering 436–447 has biased composition (low complexity); it reads ELTTETDLSESA.

Belongs to the ThiC family. The cofactor is [4Fe-4S] cluster.

The catalysed reaction is 5-amino-1-(5-phospho-beta-D-ribosyl)imidazole + S-adenosyl-L-methionine = 4-amino-2-methyl-5-(phosphooxymethyl)pyrimidine + CO + 5'-deoxyadenosine + formate + L-methionine + 3 H(+). Its pathway is cofactor biosynthesis; thiamine diphosphate biosynthesis. Functionally, catalyzes the synthesis of the hydroxymethylpyrimidine phosphate (HMP-P) moiety of thiamine from aminoimidazole ribotide (AIR) in a radical S-adenosyl-L-methionine (SAM)-dependent reaction. The chain is Phosphomethylpyrimidine synthase from Halobacterium salinarum (strain ATCC 29341 / DSM 671 / R1).